The following is a 47-amino-acid chain: Large ribosomal subunit protein bL34 (47 aa).

The protein belongs to the bacterial ribosomal protein bL34 family.

This Mycobacterium tuberculosis (strain ATCC 25177 / H37Ra) protein is Large ribosomal subunit protein bL34.